A 247-amino-acid polypeptide reads, in one-letter code: ATP synthase subunit a, chloroplastic (247 aa).

The next 5 helical transmembrane spans lie at 36–56 (GQVL…SIFG), 95–115 (VPFI…GALV), 134–154 (INTT…AGFS), 199–219 (LVVG…LMLL), and 220–240 (GLFT…AYIG).

It belongs to the ATPase A chain family. In terms of assembly, F-type ATPases have 2 components, CF(1) - the catalytic core - and CF(0) - the membrane proton channel. CF(1) has five subunits: alpha(3), beta(3), gamma(1), delta(1), epsilon(1). CF(0) has four main subunits: a, b, b' and c.

It localises to the plastid. Its subcellular location is the chloroplast thylakoid membrane. Functionally, key component of the proton channel; it plays a direct role in the translocation of protons across the membrane. This chain is ATP synthase subunit a, chloroplastic, found in Mesostigma viride (Green alga).